Here is a 372-residue protein sequence, read N- to C-terminus: Glutamate 5-kinase (372 aa).

Lys-14 contributes to the ATP binding site. Residues Ser-54, Asp-141, and Asn-153 each contribute to the substrate site. An ATP-binding site is contributed by 173-174; the sequence is TD. One can recognise a PUA domain in the interval 280 to 358; that stretch reads RGTLVLDDGA…DAIVGLLGYM (79 aa).

This sequence belongs to the glutamate 5-kinase family.

The protein resides in the cytoplasm. The catalysed reaction is L-glutamate + ATP = L-glutamyl 5-phosphate + ADP. It functions in the pathway amino-acid biosynthesis; L-proline biosynthesis; L-glutamate 5-semialdehyde from L-glutamate: step 1/2. Catalyzes the transfer of a phosphate group to glutamate to form L-glutamate 5-phosphate. This Pseudomonas fluorescens (strain Pf0-1) protein is Glutamate 5-kinase.